The sequence spans 491 residues: MGDRGGAGGTRRRRTGSRPSSHGGGGPAAAEEEVRDAAAGPDMGAAGDAPAPAPSKDADDGVASGHWELRCHRLQDSLFSSDSGFNNYRGILNWCVVMLILSNARLFLENLIKYGILVDPIQVVSLFLKDPYSWPAPCLVIAANVFAVAAFQVEKRLAVGALTEQAGLLLHVANLATILCFPAAVVLLVESITPVGSLLALMVHTILFLKLFSYRDVNLWCRRARAKAASAGKRASSAAAPHTVSYPDNLTYRDLYYFLFAPTLCYELNFPRSPRIRKRFLLRRILEMLFFTQLQVGLIQQWMVPTIQNSMKPFKDMDYSRIIERLLKLAVPNHLIWLIFFYWLFHSCLNAVAELMQFGDREFYRDWWNSESVTYFWQNWNIPVHKWCIRHFYKPMLRRGSSRWMARIGVFLASAFFHEYLVSVPLRMFRLWAFTGMMAQIPLAWFVGRFFQGNYGNAAVWLTLIIGQPIAVLMYVHDYYVLNYEAPVAGA.

The tract at residues 1–60 (MGDRGGAGGTRRRRTGSRPSSHGGGGPAAAEEEVRDAAAGPDMGAAGDAPAPAPSKDADD) is disordered. Residues 1 to 86 (MGDRGGAGGT…SLFSSDSGFN (86 aa)) lie on the Cytoplasmic side of the membrane. An involved in homomerization region spans residues 1 to 94 (MGDRGGAGGT…FNNYRGILNW (94 aa)). Phosphoserine is present on residues S20 and S21. The segment covering 37–50 (AAAGPDMGAAGDAP) has biased composition (low complexity). The chain crosses the membrane as a helical span at residues 87-121 (NYRGILNWCVVMLILSNARLFLENLIKYGILVDPI). Topologically, residues 122-133 (QVVSLFLKDPYS) are lumenal. The extracellular loop 1 (EL1) stretch occupies residues 122-133 (QVVSLFLKDPYS). The chain crosses the membrane as a helical span at residues 134-159 (WPAPCLVIAANVFAVAAFQVEKRLAV). An MBOAT fold region spans residues 134–491 (WPAPCLVIAA…LNYEAPVAGA (358 aa)). The Cytoplasmic segment spans residues 160-164 (GALTE). A helical membrane pass occupies residues 165-187 (QAGLLLHVANLATILCFPAAVVL). The Lumenal portion of the chain corresponds to 188–194 (LVESITP). A helical membrane pass occupies residues 195 to 226 (VGSLLALMVHTILFLKLFSYRDVNLWCRRARA). The Cytoplasmic portion of the chain corresponds to 227–276 (KAASAGKRASSAAAPHTVSYPDNLTYRDLYYFLFAPTLCYELNFPRSPRI). An intracellular loop 1 (IL1) region spans residues 227 to 279 (KAASAGKRASSAAAPHTVSYPDNLTYRDLYYFLFAPTLCYELNFPRSPRIRKR). The chain crosses the membrane as a helical span at residues 277–311 (RKRFLLRRILEMLFFTQLQVGLIQQWMVPTIQNSM). Topologically, residues 312–318 (KPFKDMD) are lumenal. Residues 319–356 (YSRIIERLLKLAVPNHLIWLIFFYWLFHSCLNAVAELM) traverse the membrane as a helical segment. Topologically, residues 357–402 (QFGDREFYRDWWNSESVTYFWQNWNIPVHKWCIRHFYKPMLRRGSS) are cytoplasmic. Residues 357–402 (QFGDREFYRDWWNSESVTYFWQNWNIPVHKWCIRHFYKPMLRRGSS) are intracellular loop 2 (IL2). The short motif at 363 to 369 (FYRDWWN) is the FYXDWWN motif element. An acyl-CoA is bound by residues 377–385 (WQNWNIPVH), Y393, and R407. Residues 383 to 397 (PVHKWCIRHFYKPML) form an amphipathic helix (AH) region. A helical membrane pass occupies residues 403–423 (RWMARIGVFLASAFFHEYLVS). H418 is an active-site residue. Over 424-431 (VPLRMFRL) the chain is Lumenal. A helical membrane pass occupies residues 432-450 (WAFTGMMAQIPLAWFVGRF). At 451–452 (FQ) the chain is on the cytoplasmic side. A helical transmembrane segment spans residues 453–484 (GNYGNAAVWLTLIIGQPIAVLMYVHDYYVLNY). Y480 is an an acyl-CoA binding site. Residues 485–491 (EAPVAGA) are Lumenal-facing.

Belongs to the membrane-bound acyltransferase family. Sterol o-acyltransferase subfamily. In terms of assembly, homodimer or homotetramer; both forms have similar enzymatic activities.

The protein resides in the endoplasmic reticulum membrane. It carries out the reaction an acyl-CoA + a 1,2-diacyl-sn-glycerol = a triacyl-sn-glycerol + CoA. The enzyme catalyses all-trans-retinol + an acyl-CoA = an all-trans-retinyl ester + CoA. It catalyses the reaction 2-(9Z-octadecenoyl)-glycerol + (9Z)-octadecenoyl-CoA = 1,2-di-(9Z-octadecenoyl)-sn-glycerol + CoA. The catalysed reaction is 1,2-di-(9Z-octadecenoyl)-sn-glycerol + (9Z)-octadecenoyl-CoA = 1,2,3-tri-(9Z-octadecenoyl)-glycerol + CoA. It carries out the reaction all-trans-retinol + hexadecanoyl-CoA = all-trans-retinyl hexadecanoate + CoA. The enzyme catalyses 1-O-(9Z-octadecenyl)-glycerol + (9Z)-octadecenoyl-CoA = 1-O-(9Z-octadecyl)-3-(9Z-octadecenoyl)-glycerol + CoA. It catalyses the reaction 1-O-(9Z-octadecyl)-3-(9Z-octadecenoyl)-glycerol + (9Z)-octadecenoyl-CoA = 1-O-(9Z-octadecenyl)-2,3-di-(9Z-octadecenoyl)glycerol + CoA. The catalysed reaction is 1-(9Z-octadecenoyl)-glycerol + (9Z)-octadecenoyl-CoA = 1,2-di-(9Z-octadecenoyl)-glycerol + CoA. It carries out the reaction 1,2-di-(9Z-octadecenoyl)-glycerol + (9Z)-octadecenoate + H(+) = 1,2,3-tri-(9Z-octadecenoyl)-glycerol + H2O. The enzyme catalyses 1-octadecanoyl-2-(5Z,8Z,11Z,14Z-eicosatetraenoyl)-sn-glycerol + (9Z)-octadecenoyl-CoA = 1-octadecanoyl-2-(5Z,8Z,11Z,14Z)-eicosatetraenoyl-3-(9Z)-octadecenoyl-sn-glycerol + CoA. It catalyses the reaction hexadecane-1,2-diol + 2 hexadecanoyl-CoA = 1,2-O,O-dihexadecanoyl-1,2-hexadecanediol + 2 CoA. The catalysed reaction is hexadecane-1,2-diol + hexadecanoyl-CoA = 2-hydroxyhexadecyl hexadecanoate + CoA. It carries out the reaction 2-(9Z-octadecenoyl)-glycerol + hexadecanoyl-CoA = 1-hexadecanoyl-2-(9Z-octadecenoyl)-sn-glycerol + CoA. The enzyme catalyses 1,2-di-(9Z-octadecenoyl)-sn-glycerol + hexadecanoyl-CoA = 1,2-di-(9Z)-octadecenoyl-3-hexadecanoyl-sn-glycerol + CoA. It catalyses the reaction hexadecan-1-ol + hexadecanoyl-CoA = hexadecanyl hexadecanoate + CoA. The catalysed reaction is 13-cis-retinol + hexadecanoyl-CoA = 13-cis-retinyl hexadecanoate + CoA. It carries out the reaction 1,3-di-(9Z-octadecenoyl)-glycerol + (9Z)-octadecenoyl-CoA = 1,2,3-tri-(9Z-octadecenoyl)-glycerol + CoA. The enzyme catalyses 2,3-di-(9Z)-octadecenoyl-sn-glycerol + (9Z)-octadecenoyl-CoA = 1,2,3-tri-(9Z-octadecenoyl)-glycerol + CoA. It functions in the pathway lipid metabolism; glycerolipid metabolism. Catalyzes the terminal and only committed step in triacylglycerol synthesis by using diacylglycerol and fatty acyl CoA as substrates. Highly expressed in epithelial cells of the small intestine and its activity is essential for the absorption of dietary fats. In liver, plays a role in esterifying exogenous fatty acids to glycerol, and is required to synthesize fat for storage. Also present in female mammary glands, where it produces fat in the milk. May be involved in VLDL (very low density lipoprotein) assembly. In contrast to DGAT2 it is not essential for survival. Functions as the major acyl-CoA retinol acyltransferase (ARAT) in the skin, where it acts to maintain retinoid homeostasis and prevent retinoid toxicity leading to skin and hair disorders. Exhibits additional acyltransferase activities, includin acyl CoA:monoacylglycerol acyltransferase (MGAT), wax monoester and wax diester synthases. Also able to use 1-monoalkylglycerol (1-MAkG) as an acyl acceptor for the synthesis of monoalkyl-monoacylglycerol (MAMAG). This Chlorocebus aethiops (Green monkey) protein is Diacylglycerol O-acyltransferase 1 (DGAT1).